Consider the following 246-residue polypeptide: Proteasome subunit alpha type-6 (246 aa).

The protein belongs to the peptidase T1A family. The 26S proteasome consists of a 20S proteasome core and two 19S regulatory subunits. The 20S proteasome core is composed of 28 subunits that are arranged in four stacked rings, resulting in a barrel-shaped structure. The two end rings are each formed by seven alpha subunits, and the two central rings are each formed by seven beta subunits. The catalytic chamber with the active sites is on the inside of the barrel.

It localises to the cytoplasm. The protein resides in the nucleus. Functionally, the proteasome is a multicatalytic proteinase complex which is characterized by its ability to cleave peptides with Arg, Phe, Tyr, Leu, and Glu adjacent to the leaving group at neutral or slightly basic pH. The proteasome has an ATP-dependent proteolytic activity. In Nicotiana tabacum (Common tobacco), this protein is Proteasome subunit alpha type-6 (PAA1).